A 210-amino-acid chain; its full sequence is Orotate phosphoribosyltransferase (210 aa).

5-phospho-alpha-D-ribose 1-diphosphate contacts are provided by residues Arg94, Lys98, His100, and 120–128 (EDLISTGGS). Ser124 serves as a coordination point for orotate.

The protein belongs to the purine/pyrimidine phosphoribosyltransferase family. PyrE subfamily. As to quaternary structure, homodimer. Requires Mg(2+) as cofactor.

It carries out the reaction orotidine 5'-phosphate + diphosphate = orotate + 5-phospho-alpha-D-ribose 1-diphosphate. It participates in pyrimidine metabolism; UMP biosynthesis via de novo pathway; UMP from orotate: step 1/2. In terms of biological role, catalyzes the transfer of a ribosyl phosphate group from 5-phosphoribose 1-diphosphate to orotate, leading to the formation of orotidine monophosphate (OMP). The chain is Orotate phosphoribosyltransferase from Bacillus anthracis (strain A0248).